The primary structure comprises 725 residues: Exocyst complex component 8 (725 aa).

Ser19 is modified (phosphoserine). The interval 116–159 is disordered; it reads AASGGEEGGGGAGGRDQLRGQTGFFPSPGGASRDGSGPGEEGKQ. The span at 120–129 shows a compositional bias: gly residues; the sequence is GEEGGGGAGG. The PH domain maps to 182–282; the sequence is YLVYNGDLVE…WLEVLEETKR (101 aa). Positions 285–322 are disordered; the sequence is SEKRRREQEEAAAPRGPPQVTPKASNPFEDEDDDEPTV. A compositionally biased stretch (acidic residues) spans 312–322; sequence FEDEDDDEPTV.

The protein belongs to the EXO84 family. In terms of assembly, the exocyst complex is composed of EXOC1, EXOC2, EXOC3, EXOC4, EXOC5, EXOC6, EXOC7 and EXOC8. Interacts (via PH domain) with GTP-bound RALA and RALB. Interacts with SH3BP1; required for the localization of both SH3BP1 and the exocyst to the leading edge of migrating cells.

Its subcellular location is the cytoplasm. It is found in the perinuclear region. It localises to the cell projection. The protein localises to the growth cone. Its function is as follows. Component of the exocyst complex involved in the docking of exocytic vesicles with fusion sites on the plasma membrane. This Bos taurus (Bovine) protein is Exocyst complex component 8 (EXOC8).